Consider the following 107-residue polypeptide: Large ribosomal subunit protein uL18c (107 aa).

Belongs to the universal ribosomal protein uL18 family. Part of the 50S ribosomal subunit; contacts the 5S rRNA.

It is found in the plastid. The protein resides in the chloroplast. In terms of biological role, binds 5S rRNA, forms part of the central protuberance of the 50S subunit. This is Large ribosomal subunit protein uL18c (rpl18) from Guillardia theta (Cryptophyte).